Here is a 498-residue protein sequence, read N- to C-terminus: Acetyl-coenzyme A carboxylase carboxyl transferase subunit beta, chloroplastic (498 aa).

Residues 228–498 form the CoA carboxyltransferase N-terminal domain; it reads LWVQCEICYG…LNHNLSRTLT (271 aa). Zn(2+) contacts are provided by Cys232, Cys235, Cys251, and Cys254. A C4-type zinc finger spans residues 232–254; that stretch reads CEICYGLNYKKFFKSKMNICEQC.

Belongs to the AccD/PCCB family. Acetyl-CoA carboxylase is a heterohexamer composed of biotin carboxyl carrier protein, biotin carboxylase and 2 subunits each of ACCase subunit alpha and ACCase plastid-coded subunit beta (accD). It depends on Zn(2+) as a cofactor.

It is found in the plastid. It localises to the chloroplast stroma. It carries out the reaction N(6)-carboxybiotinyl-L-lysyl-[protein] + acetyl-CoA = N(6)-biotinyl-L-lysyl-[protein] + malonyl-CoA. It participates in lipid metabolism; malonyl-CoA biosynthesis; malonyl-CoA from acetyl-CoA: step 1/1. Component of the acetyl coenzyme A carboxylase (ACC) complex. Biotin carboxylase (BC) catalyzes the carboxylation of biotin on its carrier protein (BCCP) and then the CO(2) group is transferred by the transcarboxylase to acetyl-CoA to form malonyl-CoA. The sequence is that of Acetyl-coenzyme A carboxylase carboxyl transferase subunit beta, chloroplastic from Populus alba (White poplar).